The chain runs to 814 residues: Outer membrane usher protein SefC (814 aa).

Positions 1–30 (MKKTTITLFVLTSVFHSGNVFSRQYNFDYG) are cleaved as a signal peptide. A disulfide bridge connects residues Cys-792 and Cys-813.

This sequence belongs to the fimbrial export usher family.

The protein localises to the cell outer membrane. Its function is as follows. Involved in the export and assembly of the SefA fimbrial subunit. This is Outer membrane usher protein SefC (sefC) from Salmonella enteritidis.